An 87-amino-acid polypeptide reads, in one-letter code: Protein L (87 aa).

Functionally, this protein inhibits the multiplication of double-stranded DNA phages, such as P1 and lambda. The polypeptide is Protein L (L) (Escherichia coli).